A 61-amino-acid chain; its full sequence is Small ribosomal subunit protein uS14 (61 aa).

C24, C27, C40, and C43 together coordinate Zn(2+).

Belongs to the universal ribosomal protein uS14 family. Zinc-binding uS14 subfamily. As to quaternary structure, part of the 30S ribosomal subunit. Contacts proteins S3 and S10. The cofactor is Zn(2+).

In terms of biological role, binds 16S rRNA, required for the assembly of 30S particles and may also be responsible for determining the conformation of the 16S rRNA at the A site. In Treponema pallidum (strain Nichols), this protein is Small ribosomal subunit protein uS14.